Here is a 423-residue protein sequence, read N- to C-terminus: Tumor necrosis factor receptor superfamily member 19 (423 aa).

A signal peptide spans 1 to 29 (MALKVLLEQEKTFFTLLVLLGYLSCKVTC). Residues 30-170 (ESGDCRQQEF…TASSPRDTAL (141 aa)) lie on the Extracellular side of the membrane. 3 TNFR-Cys repeats span residues 33–72 (DCRQ…DAQC), 74–114 (TCRL…DAIC), and 116–149 (DCLP…EPHC). Intrachain disulfides connect Cys34–Cys46, Cys49–Cys62, Cys52–Cys72, Cys75–Cys89, Cys92–Cys106, Cys95–Cys114, Cys117–Cys135, and Cys138–Cys149. Residue Asn105 is glycosylated (N-linked (GlcNAc...) asparagine). The chain crosses the membrane as a helical span at residues 171 to 191 (AAVICSALATVLLALLILCVI). The Cytoplasmic segment spans residues 192–423 (YCKRQFMEKK…LQVRQRLGSL (232 aa)).

Associates with TRAF1, TRAF2, TRAF3 and TRAF5. Interacts with LINGO1. As to expression, highly expressed in prostate. Detected at lower levels in thymus, spleen, testis, uterus, small intestine, colon and peripheral blood leukocytes.

It is found in the membrane. In terms of biological role, can mediate activation of JNK and NF-kappa-B. May promote caspase-independent cell death. The polypeptide is Tumor necrosis factor receptor superfamily member 19 (TNFRSF19) (Homo sapiens (Human)).